The sequence spans 492 residues: Protein nucleotidyltransferase YdiU (492 aa).

Gly-91, Gly-93, Arg-94, Lys-114, Asp-126, Gly-127, Arg-180, and Arg-187 together coordinate ATP. Asp-256 acts as the Proton acceptor in catalysis. Mg(2+) contacts are provided by Asn-257 and Asp-266. Residue Asp-266 coordinates ATP.

This sequence belongs to the SELO family. It depends on Mg(2+) as a cofactor. Requires Mn(2+) as cofactor.

It carries out the reaction L-seryl-[protein] + ATP = 3-O-(5'-adenylyl)-L-seryl-[protein] + diphosphate. The enzyme catalyses L-threonyl-[protein] + ATP = 3-O-(5'-adenylyl)-L-threonyl-[protein] + diphosphate. The catalysed reaction is L-tyrosyl-[protein] + ATP = O-(5'-adenylyl)-L-tyrosyl-[protein] + diphosphate. It catalyses the reaction L-histidyl-[protein] + UTP = N(tele)-(5'-uridylyl)-L-histidyl-[protein] + diphosphate. It carries out the reaction L-seryl-[protein] + UTP = O-(5'-uridylyl)-L-seryl-[protein] + diphosphate. The enzyme catalyses L-tyrosyl-[protein] + UTP = O-(5'-uridylyl)-L-tyrosyl-[protein] + diphosphate. In terms of biological role, nucleotidyltransferase involved in the post-translational modification of proteins. It can catalyze the addition of adenosine monophosphate (AMP) or uridine monophosphate (UMP) to a protein, resulting in modifications known as AMPylation and UMPylation. The protein is Protein nucleotidyltransferase YdiU of Synechococcus elongatus (strain ATCC 33912 / PCC 7942 / FACHB-805) (Anacystis nidulans R2).